Reading from the N-terminus, the 728-residue chain is 1,4-alpha-glucan branching enzyme GlgB (728 aa).

D405 (nucleophile) is an active-site residue. The active-site Proton donor is E458.

This sequence belongs to the glycosyl hydrolase 13 family. GlgB subfamily. In terms of assembly, monomer.

It carries out the reaction Transfers a segment of a (1-&gt;4)-alpha-D-glucan chain to a primary hydroxy group in a similar glucan chain.. Its pathway is glycan biosynthesis; glycogen biosynthesis. In terms of biological role, catalyzes the formation of the alpha-1,6-glucosidic linkages in glycogen by scission of a 1,4-alpha-linked oligosaccharide from growing alpha-1,4-glucan chains and the subsequent attachment of the oligosaccharide to the alpha-1,6 position. This is 1,4-alpha-glucan branching enzyme GlgB from Escherichia coli O6:K15:H31 (strain 536 / UPEC).